A 193-amino-acid chain; its full sequence is Cytidylate kinase (193 aa).

12-20 (GLAGSGTTT) contributes to the ATP binding site.

The protein belongs to the cytidylate kinase family. Type 2 subfamily.

It is found in the cytoplasm. It catalyses the reaction CMP + ATP = CDP + ADP. The enzyme catalyses dCMP + ATP = dCDP + ADP. This chain is Cytidylate kinase, found in Thermococcus sibiricus (strain DSM 12597 / MM 739).